Consider the following 217-residue polypeptide: Ribonuclease HII (217 aa).

Residues 26–215 enclose the RNase H type-2 domain; the sequence is EIVCGVDEAG…VREALDLMAG (190 aa). The a divalent metal cation site is built by aspartate 32, glutamate 33, and aspartate 124.

The protein belongs to the RNase HII family. It depends on Mn(2+) as a cofactor. Mg(2+) is required as a cofactor.

The protein localises to the cytoplasm. It catalyses the reaction Endonucleolytic cleavage to 5'-phosphomonoester.. Functionally, endonuclease that specifically degrades the RNA of RNA-DNA hybrids. In Burkholderia ambifaria (strain ATCC BAA-244 / DSM 16087 / CCUG 44356 / LMG 19182 / AMMD) (Burkholderia cepacia (strain AMMD)), this protein is Ribonuclease HII.